Consider the following 525-residue polypeptide: Potassium voltage-gated channel subfamily A member 3 (525 aa).

The tract at residues 1 to 23 (MTVVPGDHLLEPEAAGGGGGDPP) is disordered. Residues 1 to 184 (MTVVPGDHLL…EYPESSGPAR (184 aa)) are Cytoplasmic-facing. A helical transmembrane segment spans residues 185 to 203 (GIAIVSVLVILISIVIFCL). The Extracellular segment spans residues 204–244 (ETLPEFRDEKDYPASPSQDVFEAANNSTSGASSGASSFSDP). A glycan (N-linked (GlcNAc...) asparagine) is linked at Asn229. Residues 245-266 (FFVVETLCIIWFSFELLVRFFA) traverse the membrane as a helical segment. Cys267 carries S-palmitoyl cysteine lipidation. The Cytoplasmic portion of the chain corresponds to 267–277 (CPSKATFSRNI). A helical transmembrane segment spans residues 278–298 (MNLIDIVAIIPYFITLGTELA). The Extracellular portion of the chain corresponds to 299-312 (ERQGNGQQAMSLAI). Residues 313-331 (LRVIRLVRVFRIFKLSRHS) form a helical; Voltage-sensor membrane-spanning segment. Residues 332–347 (KGLQILGQTLKASMRE) are Cytoplasmic-facing. The helical transmembrane segment at 348–367 (LGLLIFFLFIGVILFSSAVY) threads the bilayer. At 368 to 408 (FAEADDPSSGFNSIPDAFWWAVVTMTTVGYGDMHPVTIGGK) the chain is on the extracellular side. Positions 394–399 (TVGYGD) match the Selectivity filter motif. The chain crosses the membrane as a helical span at residues 409-431 (IVGSLCAIAGVLTIALPVPVIVS). Over 432-525 (NFNYFYHRET…VNIKKIFTDV (94 aa)) the chain is Cytoplasmic. The interval 432 to 525 (NFNYFYHRET…VNIKKIFTDV (94 aa)) is interaction with KCNE4. The residue at position 449 (Tyr449) is a Phosphotyrosine. The residue at position 470 (Ser470) is a Phosphoserine; by PKA. Positions 523–525 (TDV) match the PDZ-binding motif.

Belongs to the potassium channel family. A (Shaker) (TC 1.A.1.2) subfamily. Kv1.3/KCNA3 sub-subfamily. In terms of assembly, homotetramer. Forms heterooligomers with KCNE4 which inhibits KCNA3 activity by impairing localization to the cell membrane. The stoichiometry of KCNA3 and KCNE4 in the heterooligomers are 4:1, 4:2, 4:3 or 4:4 respectively. Increasing the number of KCNE4 subunits steadily slows the activation KCNA3 and decreases its abundance at the cell membrane. However, a single subunit of KCNE4 is sufficient for the cooperative enhancement of the inactivating function of the channel. Interacts with SEC24D; this interaction is reduced in the presence of KCNE4. Interacts with DLG1, DLG2 and DLG4 via their PDZ domains. Phosphorylation on Tyr-449 inhibits its channel activity. In terms of processing, N-glycosylation promotes the cell surface expression.

It is found in the cell membrane. The catalysed reaction is K(+)(in) = K(+)(out). Activity is up-regulated by JAK2. Mediates the voltage-dependent potassium ion permeability of excitable membranes. Assuming opened or closed conformations in response to the voltage difference across the membrane, the protein forms a potassium-selective channel through which potassium ions may pass in accordance with their electrochemical gradient. The chain is Potassium voltage-gated channel subfamily A member 3 (Kcna3) from Rattus norvegicus (Rat).